The chain runs to 177 residues: MSRVAKAPVAVPAGVQVTLNGQLLTVKGKNGELSREIHNAVEVKYEADTLTFAPKAGIVNADAQAGTARALVNAMVIGVTEGFTKKLQLVGVGYRAQMKGNTVALNLGFSHSVEHELPAGVTGECPSQTEIILKSADKQLIGQVAADIRAYRKPEPYKGKGVRYADEVVRIKEAKKK.

The protein belongs to the universal ribosomal protein uL6 family. Part of the 50S ribosomal subunit.

This protein binds to the 23S rRNA, and is important in its secondary structure. It is located near the subunit interface in the base of the L7/L12 stalk, and near the tRNA binding site of the peptidyltransferase center. The chain is Large ribosomal subunit protein uL6 from Glaesserella parasuis serovar 5 (strain SH0165) (Haemophilus parasuis).